A 513-amino-acid polypeptide reads, in one-letter code: ATP synthase subunit alpha (513 aa).

Residue 169-176 coordinates ATP; that stretch reads GDRQTGKT.

Belongs to the ATPase alpha/beta chains family. As to quaternary structure, F-type ATPases have 2 components, CF(1) - the catalytic core - and CF(0) - the membrane proton channel. CF(1) has five subunits: alpha(3), beta(3), gamma(1), delta(1), epsilon(1). CF(0) has three main subunits: a(1), b(2) and c(9-12). The alpha and beta chains form an alternating ring which encloses part of the gamma chain. CF(1) is attached to CF(0) by a central stalk formed by the gamma and epsilon chains, while a peripheral stalk is formed by the delta and b chains.

The protein resides in the cell inner membrane. It catalyses the reaction ATP + H2O + 4 H(+)(in) = ADP + phosphate + 5 H(+)(out). Its function is as follows. Produces ATP from ADP in the presence of a proton gradient across the membrane. The alpha chain is a regulatory subunit. This chain is ATP synthase subunit alpha, found in Vesicomyosocius okutanii subsp. Calyptogena okutanii (strain HA).